A 156-amino-acid chain; its full sequence is SCP2 sterol-binding domain-containing protein 1 (156 aa).

An SCP2 domain is found at 44 to 156; the sequence is TVPVFEDISQ…ERVFKDWAKW (113 aa).

This is SCP2 sterol-binding domain-containing protein 1 (SCP2D1) from Bos taurus (Bovine).